The chain runs to 1104 residues: Lon protease homolog, mitochondrial (1104 aa).

The transit peptide at 1–58 (MLPLRAFARLAQRPRLSRPTQLARSSLPRPSPSRPAAHYLALAPAPSTRFLHSSPPVL) directs the protein to the mitochondrion. Disordered regions lie at residues 8–144 (ARLA…KEVA) and 275–295 (EGSQDSAKGEGEVKSFESEVP). The segment covering 22-46 (LARSSLPRPSPSRPAAHYLALAPAP) has biased composition (low complexity). Residues 80–103 (KQDDQVEKPLPDAESSKSAEERAK) are compositionally biased toward basic and acidic residues. Low complexity predominate over residues 104 to 128 (SQSSKPDIKASSSDSVSSSAPAPGS). A compositionally biased stretch (gly residues) spans 129–139 (ADGGSPPGAGG). Residues 155–444 (VLAIPITHRP…RALVLLKKEL (290 aa)) enclose the Lon N-terminal domain. A compositionally biased stretch (basic and acidic residues) spans 281-291 (AKGEGEVKSFE). 597–604 (GPPGVGKT) is a binding site for ATP. The Lon proteolytic domain maps to 895–1082 (SPPAGVSTGL…RQVLHEAFRG (188 aa)). Active-site residues include serine 987 and lysine 1030.

It belongs to the peptidase S16 family. Homohexamer or homoheptamer. Organized in a ring with a central cavity.

It localises to the mitochondrion matrix. It carries out the reaction Hydrolysis of proteins in presence of ATP.. Functionally, ATP-dependent serine protease that mediates the selective degradation of misfolded, unassembled or oxidatively damaged polypeptides as well as certain short-lived regulatory proteins in the mitochondrial matrix. May also have a chaperone function in the assembly of inner membrane protein complexes. Participates in the regulation of mitochondrial gene expression and in the maintenance of the integrity of the mitochondrial genome. Binds to mitochondrial DNA in a site-specific manner. This is Lon protease homolog, mitochondrial from Cryptococcus neoformans var. neoformans serotype D (strain JEC21 / ATCC MYA-565) (Filobasidiella neoformans).